The primary structure comprises 90 residues: Small ribosomal subunit protein uS15c (90 aa).

Belongs to the universal ribosomal protein uS15 family. Part of the 30S ribosomal subunit.

It localises to the plastid. Its subcellular location is the chloroplast. This is Small ribosomal subunit protein uS15c (rps15) from Populus alba (White poplar).